The chain runs to 213 residues: Pyridoxine/pyridoxamine 5'-phosphate oxidase (213 aa).

FMN-binding positions include 57-62 (RIVLLR), 77-78 (FT), Arg83, Lys84, and Gln106. Position 62 (Arg62) interacts with substrate. 3 residues coordinate substrate: Tyr124, Arg128, and Ser132. A disordered region spans residues 135–163 (GARASDQSRPLPDRKTLQKRVEEEEARYP). 141–142 (QS) lines the FMN pocket. The span at 145–163 (LPDRKTLQKRVEEEEARYP) shows a compositional bias: basic and acidic residues. Trp186 lines the FMN pocket. 192–194 (RLH) lines the substrate pocket. Residue Arg196 participates in FMN binding.

This sequence belongs to the pyridoxamine 5'-phosphate oxidase family. In terms of assembly, homodimer. FMN serves as cofactor.

The enzyme catalyses pyridoxamine 5'-phosphate + O2 + H2O = pyridoxal 5'-phosphate + H2O2 + NH4(+). The catalysed reaction is pyridoxine 5'-phosphate + O2 = pyridoxal 5'-phosphate + H2O2. The protein operates within cofactor metabolism; pyridoxal 5'-phosphate salvage; pyridoxal 5'-phosphate from pyridoxamine 5'-phosphate: step 1/1. It functions in the pathway cofactor metabolism; pyridoxal 5'-phosphate salvage; pyridoxal 5'-phosphate from pyridoxine 5'-phosphate: step 1/1. Catalyzes the oxidation of either pyridoxine 5'-phosphate (PNP) or pyridoxamine 5'-phosphate (PMP) into pyridoxal 5'-phosphate (PLP). This is Pyridoxine/pyridoxamine 5'-phosphate oxidase from Granulibacter bethesdensis (strain ATCC BAA-1260 / CGDNIH1).